A 225-amino-acid polypeptide reads, in one-letter code: MENLKKMAGIKAAEFVTDGMVVGLGTGSTAYYFVEEIGRRIKEEGLQIIAVTTSSVTSQQAEGLGIPLKSIDEVDLVDVTVDGADEVDPNFNGIKGGGGALLMEKVVATPTKSYIWVVDESKLVEKLGAFKLPVEVVQYGAEQVFRRFERAGYKPAFRQKDGQRFVTDMKNFIIDLDLGVIENPIEFARELDHIVGIVEHGLFNQMVDKVIVAGKAGVQVLEANK.

Residues threonine 26–threonine 29, aspartate 82–aspartate 85, and lysine 95–glycine 98 contribute to the substrate site. Glutamate 104 serves as the catalytic Proton acceptor. Lysine 122 serves as a coordination point for substrate.

The protein belongs to the ribose 5-phosphate isomerase family. Homodimer.

It carries out the reaction aldehydo-D-ribose 5-phosphate = D-ribulose 5-phosphate. Its pathway is carbohydrate degradation; pentose phosphate pathway; D-ribose 5-phosphate from D-ribulose 5-phosphate (non-oxidative stage): step 1/1. Its function is as follows. Catalyzes the reversible conversion of ribose-5-phosphate to ribulose 5-phosphate. In Streptococcus gordonii (strain Challis / ATCC 35105 / BCRC 15272 / CH1 / DL1 / V288), this protein is Ribose-5-phosphate isomerase A.